Reading from the N-terminus, the 311-residue chain is Methionyl-tRNA formyltransferase (311 aa).

110-113 (SLLP) contributes to the (6S)-5,6,7,8-tetrahydrofolate binding site.

It belongs to the Fmt family.

It catalyses the reaction L-methionyl-tRNA(fMet) + (6R)-10-formyltetrahydrofolate = N-formyl-L-methionyl-tRNA(fMet) + (6S)-5,6,7,8-tetrahydrofolate + H(+). Its function is as follows. Attaches a formyl group to the free amino group of methionyl-tRNA(fMet). The formyl group appears to play a dual role in the initiator identity of N-formylmethionyl-tRNA by promoting its recognition by IF2 and preventing the misappropriation of this tRNA by the elongation apparatus. The sequence is that of Methionyl-tRNA formyltransferase from Streptococcus equi subsp. zooepidemicus (strain H70).